The chain runs to 200 residues: Elongation factor Ts (200 aa).

The involved in Mg(2+) ion dislocation from EF-Tu stretch occupies residues 81 to 84; it reads TDFV.

It belongs to the EF-Ts family.

The protein resides in the cytoplasm. Functionally, associates with the EF-Tu.GDP complex and induces the exchange of GDP to GTP. It remains bound to the aminoacyl-tRNA.EF-Tu.GTP complex up to the GTP hydrolysis stage on the ribosome. This is Elongation factor Ts from Nitratidesulfovibrio vulgaris (strain DSM 19637 / Miyazaki F) (Desulfovibrio vulgaris).